The sequence spans 117 residues: MKCLILSFAIFVVLASQATAGNVIIGGVCQDCSPPVAENVVVGGQSYRTGRPGQGTVYINSPGAYLGALDGPIRRTGAGGGGGGGAQYPDGYSGRLPGGTYLHNKDCVGCSISGGGD.

A signal peptide spans 1-20; the sequence is MKCLILSFAIFVVLASQATA. 2 disulfide bridges follow: Cys29-Cys32 and Cys107-Cys110.

The protein belongs to the bomanin family. Hemolymph (at protein level).

It is found in the secreted. Secreted immune-induced peptide induced by Toll signaling. Has a role in resistance to bacterial and fungal infections. The sequence is that of Bomanin Bicipital 1 from Drosophila melanogaster (Fruit fly).